A 356-amino-acid polypeptide reads, in one-letter code: Probable D-xylulose reductase A (356 aa).

Zn(2+) is bound by residues Cys45, His70, and Glu71. An NAD(+)-binding site is contributed by 180–185; sequence GAGPVG.

It belongs to the zinc-containing alcohol dehydrogenase family. Requires Zn(2+) as cofactor.

The catalysed reaction is xylitol + NAD(+) = D-xylulose + NADH + H(+). It participates in carbohydrate degradation; L-arabinose degradation via L-arabinitol; D-xylulose 5-phosphate from L-arabinose (fungal route): step 4/5. In terms of biological role, xylitol dehydrogenase which catalyzes the conversion of xylitol to D-xylulose. Xylose is a major component of hemicelluloses such as xylan. Most fungi utilize D-xylose via three enzymatic reactions, xylose reductase (XR), xylitol dehydrogenase (XDH), and xylulokinase, to form xylulose 5-phosphate, which enters pentose phosphate pathway. The polypeptide is Probable D-xylulose reductase A (xdhA) (Arthroderma otae (strain ATCC MYA-4605 / CBS 113480) (Microsporum canis)).